We begin with the raw amino-acid sequence, 158 residues long: MVELLGIIRIRGWAKAPWYINETLEMLRLRYNFNTMMYPKTSQILGMLNKVSPYVTWGEIDPDTLKLLIIKRLETAKGDKVSDSYVKEVLKIENIDTMVKQLYEGKIYLHKLDQYFKLPIRLHPPKGGFKGSVKRPYKNKGEFGYRGNKINELMRRMM.

The protein belongs to the universal ribosomal protein uL30 family. In terms of assembly, part of the 50S ribosomal subunit.

This is Large ribosomal subunit protein uL30 from Saccharolobus islandicus (strain Y.G.57.14 / Yellowstone #1) (Sulfolobus islandicus).